Consider the following 315-residue polypeptide: Probable inactive acetaldehyde dehydrogenase 1 (315 aa).

NAD(+) contacts are provided by residues 14-17 (SGDV) and N288.

It belongs to the acetaldehyde dehydrogenase family.

The polypeptide is Probable inactive acetaldehyde dehydrogenase 1 (Mycolicibacterium vanbaalenii (strain DSM 7251 / JCM 13017 / BCRC 16820 / KCTC 9966 / NRRL B-24157 / PYR-1) (Mycobacterium vanbaalenii)).